We begin with the raw amino-acid sequence, 364 residues long: Aminomethyltransferase (364 aa).

This sequence belongs to the GcvT family. In terms of assembly, the glycine cleavage system is composed of four proteins: P, T, L and H.

It carries out the reaction N(6)-[(R)-S(8)-aminomethyldihydrolipoyl]-L-lysyl-[protein] + (6S)-5,6,7,8-tetrahydrofolate = N(6)-[(R)-dihydrolipoyl]-L-lysyl-[protein] + (6R)-5,10-methylene-5,6,7,8-tetrahydrofolate + NH4(+). Functionally, the glycine cleavage system catalyzes the degradation of glycine. In Escherichia coli O6:H1 (strain CFT073 / ATCC 700928 / UPEC), this protein is Aminomethyltransferase.